A 394-amino-acid polypeptide reads, in one-letter code: Fructose-bisphosphate aldolase, chloroplastic (394 aa).

The N-terminal 46 residues, 1–46 (MASASLLKTSPVLDNPEFLKGQTLRIPSVAGVRFTPSGSSSLTVRA), are a transit peptide targeting the chloroplast. The substrate site is built by arginine 93 and lysine 183. Glutamate 223 serves as the catalytic Proton acceptor. Residue lysine 265 is the Schiff-base intermediate with dihydroxyacetone-P of the active site.

The protein belongs to the class I fructose-bisphosphate aldolase family.

Its subcellular location is the plastid. It localises to the chloroplast. It catalyses the reaction beta-D-fructose 1,6-bisphosphate = D-glyceraldehyde 3-phosphate + dihydroxyacetone phosphate. The protein operates within carbohydrate degradation; glycolysis; D-glyceraldehyde 3-phosphate and glycerone phosphate from D-glucose: step 4/4. The sequence is that of Fructose-bisphosphate aldolase, chloroplastic from Spinacia oleracea (Spinach).